The chain runs to 491 residues: D-xylose-proton symporter (491 aa).

The Cytoplasmic portion of the chain corresponds to 1 to 9 (MNTQYNSSY). Residues 10-30 (IFSITLVATLGGLLFGYDTAV) traverse the membrane as a helical segment. The Periplasmic segment spans residues 31–55 (ISGTVESLNTVFVAPQNLSESAANS). Residues 56–76 (LLGFCVASALIGCIIGGALGG) form a helical membrane-spanning segment. Residues 77-89 (YCSNRFGRRDSLK) are Cytoplasmic-facing. The chain crosses the membrane as a helical span at residues 90 to 110 (IAAVLFFISGVGSAWPELGFT). The Periplasmic portion of the chain corresponds to 111 to 133 (SINPDNTVPVYLAGYVPEFVIYR). The helical transmembrane segment at 134-154 (IIGGIGVGLASMLSPMYIAEL) threads the bilayer. Over 155-165 (APAHIRGKLVS) the chain is Cytoplasmic. The chain crosses the membrane as a helical span at residues 166-186 (FNQFAIIFGQLLVYCVNYFIA). Q168 is a binding site for beta-D-xylose. Topologically, residues 187-200 (RSGDASWLNTDGWR) are periplasmic. The chain crosses the membrane as a helical span at residues 201–221 (YMFASECIPALLFLMLLYTVP). Topologically, residues 222-272 (ESPRWLMSRGKQEQAEGILRKIMGNTLATQAVQEIKHSLDHGRKTGGRLLM) are cytoplasmic. Residues 273–293 (FGVGVIVIGVMLSIFQQFVGI) traverse the membrane as a helical segment. Beta-D-xylose is bound by residues 288 to 289 (QQ) and N294. Residues 294-312 (NVVLYYAPEVFKTLGASTD) lie on the Periplasmic side of the membrane. Residues 313–333 (IALLQTIIVGVINLTFTVLAI) form a helical membrane-spanning segment. Residues 334-343 (MTVDKFGRKP) are Cytoplasmic-facing. The chain crosses the membrane as a helical span at residues 344 to 364 (LQIIGALGMAIGMFSLGTAFY). The Periplasmic segment spans residues 365–369 (TQAPG). Residues 370–390 (IVALLSMLFYVAAFAMSWGPV) traverse the membrane as a helical segment. The Cytoplasmic portion of the chain corresponds to 391–407 (CWVLLSEIFPNAIRGKA). Positions 392 and 415 each coordinate beta-D-xylose. Residues 408–428 (LAIAVAAQWLANYFVSWTFPM) form a helical membrane-spanning segment. At 429–442 (MDKNSWLVAHFHNG) the chain is on the periplasmic side. Residues 443–463 (FSYWIYGCMGVLAALFMWKFV) form a helical membrane-spanning segment. At 464-491 (PETKGKTLEELEALWEPETKKTQQTATL) the chain is on the cytoplasmic side.

This sequence belongs to the major facilitator superfamily. Sugar transporter (TC 2.A.1.1) family.

Its subcellular location is the cell inner membrane. It carries out the reaction D-xylose(in) + H(+)(in) = D-xylose(out) + H(+)(out). Uptake of D-xylose across the boundary membrane with the concomitant transport of protons into the cell (symport system). This is D-xylose-proton symporter (xylE) from Escherichia coli O157:H7.